Here is a 1105-residue protein sequence, read N- to C-terminus: MPGLAMDGPSAMASRATVADMHYDPASASQQANGGIYRNGIGKKSHSPVDGLHDSHIGCLHELPPELSHITLGFFPFNNLISRVVQQSWNDLNELLNEMGSSQAYQTGISSQLSATKNGMSEKFRGDQATENSLKKLRILEFTHSRRAEFIKLLVLSQWSRQANEVSRLIDIQAFIRMRSGFYEAALFHIGNMKQNLIVAQLANPDLKTASHVLSAGKIDALHGLEFLSPRPLAPSQVLRLLRGINKLIDMRLALHDHVPDSLQNYFVHDGRVTFIVPNEFEIDLSVASAAPSAQFFLVDMKFLFFPSSLPKGRLRSIVDHQVNSTLMNAGLVGCFNLLHNLILTHKITILFKQAIDLARTYWSEHLRVELFHRTLVLQYWSKKPGGKSWIEIGVHSGLKGSPQSTGTTTSFLQLRWFRDNEEVSATDIDFNLTFLSAKSILFSAISLHITHILRTAFEALRQNRLYCLGGLYIGMSASSKEPGDCYLELQMTQTSHLDIMVEAVSGDTVLRVAPSPITRYDTEIIVDRGSVEDIVERVSRLRCVSALEEVERYAKAVGWMPLNLRHVNLESLKRIFPPSALRSMLLFRAKCWEPSWLAVFTSAMDGDNWWIVQLQTQNPPALQSHWRLLEAQRAKLITGWFTGWLGRLHNASFSSLLSALSGMIMVQCNVDFLNEIGAIHFFPPPKDLLLQPCLRVPSIYLRLRHDDFPSQFRTIFSGGSPRRSFIDETFRISYKGIDQQSGHAITMVYGRLMTDIDMFGALYAKSVQDIAFQPKGRGFAILFRTPVGTPIIAPLLERLQQMNNIAFVVESMKSQGFQPHSLSPLRIKFSYPTQGELRGSIKFIYHDQGSHFESKLLFPATTTKPILHPRIGIDFNYQNPHRRITESLSTILNSHKDGMSLVLELINITLPLLVTLERICAEEYIDNAWCFRAQYTARSARLYQIRYPFLRYRFNVSASQRKSYVVWVIQNSTPGPERSKHPSLELRLKDQIYNSQGDGWRGINQGAMAYSANVSRLVFDLHQLMKSYISQMAKSNQRGEPTDSSPSAGCEFGRYLPKNENKKGHIQTTTAPTLEHAYGNSNMVVQSVRQGEAAARDVDVIAID.

The tract at residues Ala28 to Pro48 is disordered.

The protein belongs to the Mediator complex subunit 14 family. Component of the Mediator complex.

It is found in the nucleus. Component of the Mediator complex, a coactivator involved in the regulated transcription of nearly all RNA polymerase II-dependent genes. Mediator functions as a bridge to convey information from gene-specific regulatory proteins to the basal RNA polymerase II transcription machinery. Mediator is recruited to promoters by direct interactions with regulatory proteins and serves as a scaffold for the assembly of a functional preinitiation complex with RNA polymerase II and the general transcription factors. This is Mediator of RNA polymerase II transcription subunit 14 (RGR1) from Coccidioides immitis (strain RS) (Valley fever fungus).